The following is a 200-amino-acid chain: dITP/XTP pyrophosphatase (200 aa).

Threonine 8–lysine 13 serves as a coordination point for substrate. Aspartate 69 (proton acceptor) is an active-site residue. Aspartate 69 lines the Mg(2+) pocket. Substrate contacts are provided by residues serine 70, phenylalanine 154–aspartate 157, lysine 177, and histidine 182–arginine 183.

It belongs to the HAM1 NTPase family. As to quaternary structure, homodimer. Mg(2+) is required as a cofactor.

It catalyses the reaction XTP + H2O = XMP + diphosphate + H(+). It carries out the reaction dITP + H2O = dIMP + diphosphate + H(+). The catalysed reaction is ITP + H2O = IMP + diphosphate + H(+). Its function is as follows. Pyrophosphatase that catalyzes the hydrolysis of nucleoside triphosphates to their monophosphate derivatives, with a high preference for the non-canonical purine nucleotides XTP (xanthosine triphosphate), dITP (deoxyinosine triphosphate) and ITP. Seems to function as a house-cleaning enzyme that removes non-canonical purine nucleotides from the nucleotide pool, thus preventing their incorporation into DNA/RNA and avoiding chromosomal lesions. The sequence is that of dITP/XTP pyrophosphatase from Vibrio vulnificus (strain CMCP6).